We begin with the raw amino-acid sequence, 450 residues long: tRNA modification GTPase MnmE (450 aa).

3 residues coordinate (6S)-5-formyl-5,6,7,8-tetrahydrofolate: R20, E78, and K117. The region spanning 211–372 is the TrmE-type G domain; it reads GLRMVIVGKP…LEESIYRETQ (162 aa). Residue N221 coordinates K(+). GTP-binding positions include 221-226, 240-246, 265-268, 326-329, and 353-355; these read NVGKST, TDIPGTT, DTAG, NKVD, and SAL. S225 serves as a coordination point for Mg(2+). Residues T240, I242, and T245 each contribute to the K(+) site. T246 serves as a coordination point for Mg(2+). Position 450 (K450) interacts with (6S)-5-formyl-5,6,7,8-tetrahydrofolate.

The protein belongs to the TRAFAC class TrmE-Era-EngA-EngB-Septin-like GTPase superfamily. TrmE GTPase family. As to quaternary structure, homodimer. Heterotetramer of two MnmE and two MnmG subunits. Requires K(+) as cofactor.

Its subcellular location is the cytoplasm. Exhibits a very high intrinsic GTPase hydrolysis rate. Involved in the addition of a carboxymethylaminomethyl (cmnm) group at the wobble position (U34) of certain tRNAs, forming tRNA-cmnm(5)s(2)U34. The protein is tRNA modification GTPase MnmE of Thermotoga maritima (strain ATCC 43589 / DSM 3109 / JCM 10099 / NBRC 100826 / MSB8).